The following is a 112-amino-acid chain: MNTYNINITKSALDHLNSISKLNSEDKLYIRIGIKQGGCSGLSYFMTYEKKSNISDNDLVYDYDNFTLVCDNKSILYLYGISLDYSSSLIDGGFKFLNPNAKQTCGCGKSFS.

Fe cation-binding residues include C39, C105, and C107.

It belongs to the HesB/IscA family. Ycf83 subfamily.

It is found in the plastid. Its subcellular location is the chloroplast. This is an uncharacterized protein from Galdieria sulphuraria (Red alga).